The primary structure comprises 72 residues: Large ribosomal subunit protein bL31 (72 aa).

Zn(2+)-binding residues include Cys17, Cys19, Cys37, and Cys40.

The protein belongs to the bacterial ribosomal protein bL31 family. Type A subfamily. Part of the 50S ribosomal subunit. Requires Zn(2+) as cofactor.

Functionally, binds the 23S rRNA. In Clostridium botulinum (strain ATCC 19397 / Type A), this protein is Large ribosomal subunit protein bL31.